A 118-amino-acid chain; its full sequence is Large ribosomal subunit protein bL17 (118 aa).

This sequence belongs to the bacterial ribosomal protein bL17 family. As to quaternary structure, part of the 50S ribosomal subunit. Contacts protein L32.

This chain is Large ribosomal subunit protein bL17, found in Aster yellows witches'-broom phytoplasma (strain AYWB).